A 140-amino-acid chain; its full sequence is Active regulator of SIRT1 (140 aa).

Disordered stretches follow at residues 1–52 (MSAS…KNKA) and 95–123 (QQVLTQNRGRKSKDRPAEKKEKKKPEGTV). Residues 108–120 (DRPAEKKEKKKPE) are compositionally biased toward basic and acidic residues.

Belongs to the AROS family. Part of the small subunit (SSU) processome, composed of more than 70 proteins and the RNA chaperone small nucleolar RNA (snoRNA) U3.

The protein localises to the nucleus. The protein resides in the nucleolus. In terms of biological role, part of the small subunit (SSU) processome, first precursor of the small eukaryotic ribosomal subunit. During the assembly of the SSU processome in the nucleolus, many ribosome biogenesis factors, an RNA chaperone and ribosomal proteins associate with the nascent pre-rRNA and work in concert to generate RNA folding, modifications, rearrangements and cleavage as well as targeted degradation of pre-ribosomal RNA by the RNA exosome. Acts as a chaperone that specifically mediates the integration of RPS19 in state post-A1. Direct regulator of SIRT1. The polypeptide is Active regulator of SIRT1 (RPS19BP1) (Gallus gallus (Chicken)).